Reading from the N-terminus, the 489-residue chain is Ulvan Lyase-PL25 (489 aa).

Residues 1–31 form the signal peptide; that stretch reads MNLNKTLRKNSPSGYKALLTFSIICGLMATG. Residue cysteine 32 is the site of N-palmitoyl cysteine attachment. Cysteine 32 is lipidated: S-diacylglycerol cysteine. Asparagine 60 and asparagine 122 together coordinate substrate. The Proton donor role is filled by histidine 123. Lysine 125 and histidine 143 together coordinate substrate. Residue tyrosine 188 is the Proton acceptor of the active site. 3 residues coordinate substrate: arginine 204, histidine 208, and tyrosine 246. Histidine 208 is a binding site for Zn(2+). 3 residues coordinate Zn(2+): histidine 264, cysteine 266, and histidine 278. Histidine 278 contributes to the substrate binding site.

It belongs to the polysaccharide lyase 25 family.

It localises to the cell membrane. Its function is as follows. Ulvan lyase involved in ulvan degradation. Ulvan is the main polysaccharide component of the Ulvales (green seaweed) cell wall. It is composed of disaccharide building blocks comprising 3-sulfated rhamnose (Rha3S) linked to D-glucuronic acid (GlcA), L-iduronic acid (IduA), or D-xylose (Xyl). Ulvan lyase catalyzes the endolytic cleavage of the glycosidic bond between Rha3S and the uronic acids GlcA or IduA, producing oligosaccharides that have unsaturated 4-deoxy-L-threo-hex-4-enopyranosiduronic acid (deltaUA) at the non-reducing end. This results eventually in the degradation of the ulvan polysaccharide into deltaUA-Rha3S disaccharides and deltaUA-Rha3S-Xyl-Rha3S tetrasaccharides. This chain is Ulvan Lyase-PL25, found in Pseudoalteromonas sp. (strain PLSV).